A 533-amino-acid chain; its full sequence is CTP synthase (533 aa).

An amidoligase domain region spans residues 1–269 (MKKNLKILVI…HEILSSKLNI (269 aa)). S16 serves as a coordination point for CTP. A UTP-binding site is contributed by S16. ATP contacts are provided by residues 17–22 (GIGKGV) and D73. The Mg(2+) site is built by D73 and E143. Residues 150–152 (DME), 190–195 (KSKPTQ), and K226 each bind CTP. UTP is bound by residues 190–195 (KSKPTQ) and K226. Positions 304–533 (YAELDDSYAS…LFLGLIKACI (230 aa)) constitute a Glutamine amidotransferase type-1 domain. G355 contributes to the L-glutamine binding site. Catalysis depends on C382, which acts as the Nucleophile; for glutamine hydrolysis. L-glutamine is bound by residues 383 to 386 (LGLQ), E406, and R466. Catalysis depends on residues H511 and E513.

This sequence belongs to the CTP synthase family. In terms of assembly, homotetramer.

The enzyme catalyses UTP + L-glutamine + ATP + H2O = CTP + L-glutamate + ADP + phosphate + 2 H(+). It carries out the reaction L-glutamine + H2O = L-glutamate + NH4(+). The catalysed reaction is UTP + NH4(+) + ATP = CTP + ADP + phosphate + 2 H(+). It participates in pyrimidine metabolism; CTP biosynthesis via de novo pathway; CTP from UDP: step 2/2. With respect to regulation, allosterically activated by GTP, when glutamine is the substrate; GTP has no effect on the reaction when ammonia is the substrate. The allosteric effector GTP functions by stabilizing the protein conformation that binds the tetrahedral intermediate(s) formed during glutamine hydrolysis. Inhibited by the product CTP, via allosteric rather than competitive inhibition. Its function is as follows. Catalyzes the ATP-dependent amination of UTP to CTP with either L-glutamine or ammonia as the source of nitrogen. Regulates intracellular CTP levels through interactions with the four ribonucleotide triphosphates. In Borreliella afzelii (strain PKo) (Borrelia afzelii), this protein is CTP synthase.